A 144-amino-acid polypeptide reads, in one-letter code: D-aminoacyl-tRNA deacylase (144 aa).

Positions 136 to 137 (GP) match the Gly-cisPro motif, important for rejection of L-amino acids motif.

It belongs to the DTD family. In terms of assembly, homodimer.

The protein localises to the cytoplasm. It carries out the reaction glycyl-tRNA(Ala) + H2O = tRNA(Ala) + glycine + H(+). The enzyme catalyses a D-aminoacyl-tRNA + H2O = a tRNA + a D-alpha-amino acid + H(+). Functionally, an aminoacyl-tRNA editing enzyme that deacylates mischarged D-aminoacyl-tRNAs. Also deacylates mischarged glycyl-tRNA(Ala), protecting cells against glycine mischarging by AlaRS. Acts via tRNA-based rather than protein-based catalysis; rejects L-amino acids rather than detecting D-amino acids in the active site. By recycling D-aminoacyl-tRNA to D-amino acids and free tRNA molecules, this enzyme counteracts the toxicity associated with the formation of D-aminoacyl-tRNA entities in vivo and helps enforce protein L-homochirality. The protein is D-aminoacyl-tRNA deacylase of Haemophilus influenzae (strain PittGG).